The chain runs to 151 residues: Sperm surface protein Sp17 (151 aa).

Disordered stretches follow at residues 56–115 (DPAE…EKEE) and 127–151 (GHIAREEAKKMKTNSLQNEEKEENK). Basic and acidic residues predominate over residues 62–98 (SKVEDRFYNNHAFEEQEPPEKSDPKQEESQISGKEEE). The IQ domain maps to 114-143 (EEVAAVKIQAAFRGHIAREEAKKMKTNSLQ).

In terms of assembly, homodimer. May interact with ROPN1. Testis and sperm specific.

It is found in the membrane. Functionally, sperm surface zona pellucida binding protein. Helps to bind spermatozoa to the zona pellucida with high affinity. Might function in binding zona pellucida and carbohydrates. The chain is Sperm surface protein Sp17 (SPA17) from Homo sapiens (Human).